The sequence spans 1437 residues: IQ domain-containing protein N (1437 aa).

The region spanning 84–112 is the IQ 1 domain; that stretch reads SRAATVIQASWKGYRLRQKLISQMTAAKA. Disordered regions lie at residues 332-353, 416-440, and 848-878; these read TSPT…SLSN, SQAQ…KPSP, and STGS…QNPR. Over residues 422 to 440 the composition is skewed to low complexity; that stretch reads TVSTSSKTSPSSPTVKPSP. A compositionally biased stretch (polar residues) spans 861–878; it reads AQPQLHSHAPNKTMQNPR. IQ domains lie at 1190–1216, 1217–1239, 1240–1258, 1361–1389, and 1390–1413; these read QAVV…QWAT, IIQA…RATT, IIQA…ARQV, QHRA…SAAK, and MVQA…LGTG.

In terms of assembly, interacts with calmodulin. Expressed in testis, in elongating spermatids (at protein level).

Its function is as follows. Essential for spermiogenesis and fertilization. May be required for manchette assembly in elongating spermatids. The sequence is that of IQ domain-containing protein N (Iqcn) from Mus musculus (Mouse).